The chain runs to 122 residues: Large ribosomal subunit protein uL14 (122 aa).

The protein belongs to the universal ribosomal protein uL14 family. In terms of assembly, part of the 50S ribosomal subunit. Forms a cluster with proteins L3 and L19. In the 70S ribosome, L14 and L19 interact and together make contacts with the 16S rRNA in bridges B5 and B8.

In terms of biological role, binds to 23S rRNA. Forms part of two intersubunit bridges in the 70S ribosome. The polypeptide is Large ribosomal subunit protein uL14 (Petrotoga mobilis (strain DSM 10674 / SJ95)).